The following is a 100-amino-acid chain: Urease subunit gamma (100 aa).

This sequence belongs to the urease gamma subunit family. In terms of assembly, heterotrimer of UreA (gamma), UreB (beta) and UreC (alpha) subunits. Three heterotrimers associate to form the active enzyme.

The protein localises to the cytoplasm. It carries out the reaction urea + 2 H2O + H(+) = hydrogencarbonate + 2 NH4(+). Its pathway is nitrogen metabolism; urea degradation; CO(2) and NH(3) from urea (urease route): step 1/1. The chain is Urease subunit gamma from Alkalilimnicola ehrlichii (strain ATCC BAA-1101 / DSM 17681 / MLHE-1).